The chain runs to 156 residues: AP-1 complex subunit sigma-1 (156 aa).

This sequence belongs to the adaptor complexes small subunit family. In terms of assembly, adapter protein complex 1 (AP-1) is a heterotetramer composed of two large adaptins (gamma-type subunit APL4 and beta-type subunit APL2), a medium adaptin (mu-type subunit APM1) and a small adaptin (sigma-type subunit APS1). AP-1 interacts with clathrin. Also a component of the AP-1R complex composed of at least APM2, APL4 and APS1.

Its subcellular location is the cytoplasm. The protein localises to the nucleus. It localises to the cytoplasmic vesicle. It is found in the clathrin-coated vesicle membrane. The protein resides in the endosome. Its subcellular location is the golgi apparatus. In terms of biological role, component of the adapter complexes which link clathrin to receptors in coated vesicles. Clathrin-associated protein complexes are believed to interact with the cytoplasmic tails of membrane proteins, leading to their selection and concentration. AP19 is probably a subunit of the Golgi membrane adapter. Component of the AP-1-related (AP-1R) complex, an adapter protein complex that mediates sorting of cargo SNARE SNC1. In contrast to the APM1-containing AP-1 complex, AP-1R is incapable of sorting CHS3. This is AP-1 complex subunit sigma-1 (APS1) from Saccharomyces cerevisiae (strain ATCC 204508 / S288c) (Baker's yeast).